A 314-amino-acid polypeptide reads, in one-letter code: MRFKGLDLNLLVALDALMTERNLTAAARKIHLSQPAMSAAVARLRTYFGDELFTMRGRELVPTPRAEGLAAPIREALLHIQLSIISRDAFDPAESSRRFRIILSDFMTIVFFRRIIDRVAREAPAVRFELLPFSDEHDELLRRGEVDFLVFPELFMSSAHPKATLFEETLVCVGCRTNKQLSRQLTVEKYMSMGHVAAKFGRALRPNIEEWFLLEHGLKRRIEVVVQGFGMIPPVLVDTVRIGTMPLRLAKHFEKQMLLKIVEPPLPLPSFTEAVQWPAAKNTDPASIWMRRIILQEAANMASAHEAARHRRHC.

The HTH lysR-type domain occupies 6–63; sequence LDLNLLVALDALMTERNLTAAARKIHLSQPAMSAAVARLRTYFGDELFTMRGRELVPT. The segment at residues 23 to 42 is a DNA-binding region (H-T-H motif); that stretch reads LTAAARKIHLSQPAMSAAVA.

The protein belongs to the LysR transcriptional regulatory family.

Functionally, nodD regulates the expression of the nodABCFE genes which encode other nodulation proteins. NodD is also a negative regulator of its own expression. Binds flavonoids as inducers. The sequence is that of Nodulation protein D 1 (nodD1) from Bradyrhizobium sp. (strain NC92).